We begin with the raw amino-acid sequence, 267 residues long: Glucosamine-6-phosphate deaminase (267 aa).

The Proton acceptor; for enolization step role is filled by Asp-72. The For ring-opening step role is filled by Asp-141. The Proton acceptor; for ring-opening step role is filled by His-143. Catalysis depends on Glu-148, which acts as the For ring-opening step.

It belongs to the glucosamine/galactosamine-6-phosphate isomerase family. NagB subfamily. As to quaternary structure, homohexamer.

It carries out the reaction alpha-D-glucosamine 6-phosphate + H2O = beta-D-fructose 6-phosphate + NH4(+). The protein operates within amino-sugar metabolism; N-acetylneuraminate degradation; D-fructose 6-phosphate from N-acetylneuraminate: step 5/5. Its activity is regulated as follows. Allosterically activated by N-acetylglucosamine 6-phosphate (GlcNAc6P). Catalyzes the reversible isomerization-deamination of glucosamine 6-phosphate (GlcN6P) to form fructose 6-phosphate (Fru6P) and ammonium ion. The polypeptide is Glucosamine-6-phosphate deaminase (Haemophilus ducreyi (strain 35000HP / ATCC 700724)).